The sequence spans 88 residues: Small ribosomal subunit protein uS17 (88 aa).

It belongs to the universal ribosomal protein uS17 family. In terms of assembly, part of the 30S ribosomal subunit.

In terms of biological role, one of the primary rRNA binding proteins, it binds specifically to the 5'-end of 16S ribosomal RNA. In Prochlorococcus marinus (strain MIT 9312), this protein is Small ribosomal subunit protein uS17.